The chain runs to 258 residues: NAD kinase (258 aa).

Asp-44 acts as the Proton acceptor in catalysis. Residues Asp-44–Gly-45, Asn-116–Glu-117, Asp-146, Ala-154, and Thr-157–Ser-162 contribute to the NAD(+) site.

This sequence belongs to the NAD kinase family. Requires a divalent metal cation as cofactor.

It localises to the cytoplasm. It carries out the reaction NAD(+) + ATP = ADP + NADP(+) + H(+). Functionally, involved in the regulation of the intracellular balance of NAD and NADP, and is a key enzyme in the biosynthesis of NADP. Catalyzes specifically the phosphorylation on 2'-hydroxyl of the adenosine moiety of NAD to yield NADP. This Zymomonas mobilis subsp. mobilis (strain ATCC 31821 / ZM4 / CP4) protein is NAD kinase.